The chain runs to 86 residues: Large ribosomal subunit protein bL31B (86 aa).

Belongs to the bacterial ribosomal protein bL31 family. Type B subfamily. Part of the 50S ribosomal subunit.

This Streptococcus agalactiae serotype III (strain NEM316) protein is Large ribosomal subunit protein bL31B.